The primary structure comprises 327 residues: Zinc transport protein ZntB (327 aa).

The Cytoplasmic portion of the chain corresponds to 1–273 (MEAIKGADVN…ARRTYTMSLM (273 aa)). The chain crosses the membrane as a helical span at residues 274–294 (AMVFLPSTFLTGLFGVNLGGI). At 295–300 (PGGGWR) the chain is on the periplasmic side. Residues 301 to 321 (FGFSLFCILLVVLIGGVALWL) form a helical membrane-spanning segment. Residues 322–327 (HRSKWL) lie on the Cytoplasmic side of the membrane.

It belongs to the CorA metal ion transporter (MIT) (TC 1.A.35) family.

It localises to the cell inner membrane. It catalyses the reaction Zn(2+)(out) + H(+)(out) = Zn(2+)(in) + H(+)(in). In terms of biological role, zinc transporter. Acts as a Zn(2+):proton symporter, which likely mediates zinc ion uptake. This chain is Zinc transport protein ZntB, found in Escherichia fergusonii (strain ATCC 35469 / DSM 13698 / CCUG 18766 / IAM 14443 / JCM 21226 / LMG 7866 / NBRC 102419 / NCTC 12128 / CDC 0568-73).